Consider the following 198-residue polypeptide: Armadillo repeat-containing protein 7 (198 aa).

ARM repeat units follow at residues 57–99 (QVLD…HAGG) and 100–140 (VPLI…TATP). The residue at position 169 (serine 169) is a Phosphoserine.

As to quaternary structure, component of the minor spliceosome. Within this complex, interacts with RBM48.

As a component of the minor spliceosome, involved in the splicing of U12-type introns in pre-mRNAs. The protein is Armadillo repeat-containing protein 7 (ARMC7) of Homo sapiens (Human).